The primary structure comprises 155 residues: Transcriptional repressor NrdR (155 aa).

Residues 3–34 fold into a zinc finger; that stretch reads CPYCQNADTRVVDSRLIGEGEQVRRRRQCPSC. The ATP-cone domain maps to 49–139; that stretch reads PRVVKSDGRR…VYRRFEDVGA (91 aa).

This sequence belongs to the NrdR family. It depends on Zn(2+) as a cofactor.

Its function is as follows. Negatively regulates transcription of bacterial ribonucleotide reductase nrd genes and operons by binding to NrdR-boxes. The polypeptide is Transcriptional repressor NrdR (Halorhodospira halophila (strain DSM 244 / SL1) (Ectothiorhodospira halophila (strain DSM 244 / SL1))).